A 97-amino-acid chain; its full sequence is Sorbitol dehydrogenase (97 aa).

C44 is a binding site for Zn(2+). Y50 provides a ligand contact to substrate. Zn(2+)-binding residues include H69 and E70.

The protein belongs to the zinc-containing alcohol dehydrogenase family. In terms of assembly, homotetramer. Zn(2+) is required as a cofactor.

The protein resides in the mitochondrion membrane. It is found in the cell projection. It localises to the cilium. Its subcellular location is the flagellum. It carries out the reaction xylitol + NAD(+) = D-xylulose + NADH + H(+). The catalysed reaction is L-iditol + NAD(+) = keto-L-sorbose + NADH + H(+). It catalyses the reaction keto-D-fructose + NADH + H(+) = D-sorbitol + NAD(+). In terms of biological role, polyol dehydrogenase that catalyzes the reversible NAD(+)-dependent oxidation of various sugar alcohols. Is active with xylitol, L-iditol and D-sorbitol (D-glucitol) as substrates, leading to the C2-oxidized products D-xylulose, L-sorbose and D-fructose, respectively. Is a key enzyme in the polyol pathway that interconverts glucose and fructose via sorbitol, which constitutes an important alternate route for glucose metabolism. May play a role in sperm motility by using sorbitol as an alternative energy source for sperm motility. This Sus scrofa (Pig) protein is Sorbitol dehydrogenase (SORD).